The sequence spans 179 residues: Large ribosomal subunit protein uL5 (179 aa).

Belongs to the universal ribosomal protein uL5 family. In terms of assembly, part of the 50S ribosomal subunit; part of the 5S rRNA/L5/L18/L25 subcomplex. Contacts the 5S rRNA and the P site tRNA. Forms a bridge to the 30S subunit in the 70S ribosome.

In terms of biological role, this is one of the proteins that bind and probably mediate the attachment of the 5S RNA into the large ribosomal subunit, where it forms part of the central protuberance. In the 70S ribosome it contacts protein S13 of the 30S subunit (bridge B1b), connecting the 2 subunits; this bridge is implicated in subunit movement. Contacts the P site tRNA; the 5S rRNA and some of its associated proteins might help stabilize positioning of ribosome-bound tRNAs. The polypeptide is Large ribosomal subunit protein uL5 (Staphylococcus saprophyticus subsp. saprophyticus (strain ATCC 15305 / DSM 20229 / NCIMB 8711 / NCTC 7292 / S-41)).